Reading from the N-terminus, the 409-residue chain is Tryptophan synthase beta chain (409 aa).

At lysine 95 the chain carries N6-(pyridoxal phosphate)lysine.

The protein belongs to the TrpB family. In terms of assembly, tetramer of two alpha and two beta chains. Requires pyridoxal 5'-phosphate as cofactor.

It carries out the reaction (1S,2R)-1-C-(indol-3-yl)glycerol 3-phosphate + L-serine = D-glyceraldehyde 3-phosphate + L-tryptophan + H2O. It functions in the pathway amino-acid biosynthesis; L-tryptophan biosynthesis; L-tryptophan from chorismate: step 5/5. In terms of biological role, the beta subunit is responsible for the synthesis of L-tryptophan from indole and L-serine. This chain is Tryptophan synthase beta chain, found in Pseudomonas syringae pv. tomato (strain ATCC BAA-871 / DC3000).